We begin with the raw amino-acid sequence, 144 residues long: D-aminoacyl-tRNA deacylase (144 aa).

The short motif at 136 to 137 (GP) is the Gly-cisPro motif, important for rejection of L-amino acids element.

The protein belongs to the DTD family. In terms of assembly, homodimer.

It is found in the cytoplasm. The catalysed reaction is glycyl-tRNA(Ala) + H2O = tRNA(Ala) + glycine + H(+). The enzyme catalyses a D-aminoacyl-tRNA + H2O = a tRNA + a D-alpha-amino acid + H(+). Functionally, an aminoacyl-tRNA editing enzyme that deacylates mischarged D-aminoacyl-tRNAs. Also deacylates mischarged glycyl-tRNA(Ala), protecting cells against glycine mischarging by AlaRS. Acts via tRNA-based rather than protein-based catalysis; rejects L-amino acids rather than detecting D-amino acids in the active site. By recycling D-aminoacyl-tRNA to D-amino acids and free tRNA molecules, this enzyme counteracts the toxicity associated with the formation of D-aminoacyl-tRNA entities in vivo and helps enforce protein L-homochirality. This chain is D-aminoacyl-tRNA deacylase, found in Mannheimia succiniciproducens (strain KCTC 0769BP / MBEL55E).